Reading from the N-terminus, the 471-residue chain is Mixed lineage kinase domain-like protein (471 aa).

The N-terminal bundle and brace (NBB); mediates INSP6 binding stretch occupies residues Met-1–Gln-149. Positions Ser-55–Asn-84 form a coiled coil. The residue at position 125 (Ser-125) is a Phosphoserine. Residues Gln-139–Leu-180 adopt a coiled-coil conformation. The Protein kinase domain occupies Lys-194–Phe-469. Residues Leu-209–Leu-217 and Lys-230 contribute to the ATP site. Position 357 is a phosphothreonine; by RIPK3 (Thr-357). Residues Ser-358 and Ser-360 each carry the phosphoserine; by RIPK3 modification.

Belongs to the protein kinase superfamily. As to quaternary structure, homooligomer. Homotrimer; forms homotrimers on necroptosis induction. Upon TNF-induced necrosis, forms in complex with PGAM5, RIPK1 and RIPK3. Within this complex, may play a role in the proper targeting of RIPK1-RIPK3 to its downstream effector PGAM5. Interacts with RIPK3; the interaction is direct and promotes its phosphorylation and subsequent activation. Post-translationally, phosphorylation by RIPK3 induces a conformational switch that is required for necroptosis. It also induces homotrimerization and localization to the plasma membrane.

It is found in the cytoplasm. The protein resides in the cell membrane. The protein localises to the nucleus. Activated via binding to highly phosphorylated inositol phosphates such as inositolhexakisphosphate (InsP6) which mediates the release of an N-terminal auto-inhibitory region. Activation requires not only RIPK3-dependent phosphorylation but also binding to highly phosphorylated inositol phosphates. Inhibited by necrosulfonamide, a specific inhibitor of necroptosis that targets Cys-86. Functionally, pseudokinase that plays a key role in TNF-induced necroptosis, a programmed cell death process. Does not have protein kinase activity. Activated following phosphorylation by RIPK3, leading to homotrimerization, localization to the plasma membrane and execution of programmed necrosis characterized by calcium influx and plasma membrane damage. In addition to TNF-induced necroptosis, necroptosis can also take place in the nucleus in response to orthomyxoviruses infection: following activation by ZBP1, MLKL is phosphorylated by RIPK3 in the nucleus, triggering disruption of the nuclear envelope and leakage of cellular DNA into the cytosol.following ZBP1 activation, which senses double-stranded Z-RNA structures, nuclear RIPK3 catalyzes phosphorylation and activation of MLKL, promoting disruption of the nuclear envelope and leakage of cellular DNA into the cytosol. Binds to highly phosphorylated inositol phosphates such as inositolhexakisphosphate (InsP6) which is essential for its necroptotic function. This is Mixed lineage kinase domain-like protein from Homo sapiens (Human).